Here is a 602-residue protein sequence, read N- to C-terminus: Aspartate--tRNA(Asp/Asn) ligase (602 aa).

Residue Glu175 participates in L-aspartate binding. Residues 199 to 202 (QIFK) are aspartate. Arg221 provides a ligand contact to L-aspartate. ATP-binding positions include 221 to 223 (RDE) and Gln230. His458 contributes to the L-aspartate binding site. Residue Glu492 coordinates ATP. Residue Arg499 participates in L-aspartate binding. Residue 544-547 (GLDR) coordinates ATP.

Belongs to the class-II aminoacyl-tRNA synthetase family. Type 1 subfamily. Homodimer.

It is found in the cytoplasm. The catalysed reaction is tRNA(Asx) + L-aspartate + ATP = L-aspartyl-tRNA(Asx) + AMP + diphosphate. In terms of biological role, aspartyl-tRNA synthetase with relaxed tRNA specificity since it is able to aspartylate not only its cognate tRNA(Asp) but also tRNA(Asn). Reaction proceeds in two steps: L-aspartate is first activated by ATP to form Asp-AMP and then transferred to the acceptor end of tRNA(Asp/Asn). The polypeptide is Aspartate--tRNA(Asp/Asn) ligase (Cupriavidus taiwanensis (strain DSM 17343 / BCRC 17206 / CCUG 44338 / CIP 107171 / LMG 19424 / R1) (Ralstonia taiwanensis (strain LMG 19424))).